Reading from the N-terminus, the 779-residue chain is uncharacterized protein (779 aa).

Residues Ser97 and Ser120 each carry the phosphoserine modification. Residues 125-135 (EIDGEDEKKSV) are compositionally biased toward basic and acidic residues. Residues 125-174 (EIDGEDEKKSVGQESITGSAKRKDRRSKTNGSKRQKAEANREPPSDISLS) are disordered. Basic residues predominate over residues 144–158 (AKRKDRRSKTNGSKR). Over residues 159–168 (QKAEANREPP) the composition is skewed to basic and acidic residues. ATP is bound by residues 215–222 (GPPGCGKT) and 533–540 (GPPGCGKT). The interval 759 to 779 (DRQKYQRLAKRWSSASTNDAD) is disordered.

Belongs to the AAA ATPase family.

The protein resides in the nucleus. This is an uncharacterized protein from Schizosaccharomyces pombe (strain 972 / ATCC 24843) (Fission yeast).